The primary structure comprises 147 residues: Siroheme decarboxylase NirG subunit (147 aa).

Belongs to the Ahb/Nir family. Probably forms a complex composed of NirD, NirL, NirG and NirH. All proteins are required for the total conversion of siroheme to didecarboxysiroheme.

The catalysed reaction is siroheme + 2 H(+) = 12,18-didecarboxysiroheme + 2 CO2. The protein operates within porphyrin-containing compound metabolism. Involved in heme d1 biosynthesis. Catalyzes the decarboxylation of siroheme into didecarboxysiroheme. The polypeptide is Siroheme decarboxylase NirG subunit (Pseudomonas aeruginosa (strain ATCC 15692 / DSM 22644 / CIP 104116 / JCM 14847 / LMG 12228 / 1C / PRS 101 / PAO1)).